Consider the following 370-residue polypeptide: Protein STRICTOSIDINE SYNTHASE-LIKE 4 (370 aa).

Positions 1-21 are cleaved as a signal peptide; the sequence is MVLFFSTRFLFFSIFFPCLIS. The N-linked (GlcNAc...) asparagine glycan is linked to asparagine 101. Position 303 is a phosphotyrosine (tyrosine 303).

It belongs to the strictosidine synthase family.

The protein resides in the vacuole. This Arabidopsis thaliana (Mouse-ear cress) protein is Protein STRICTOSIDINE SYNTHASE-LIKE 4.